Consider the following 450-residue polypeptide: Neuronal acetylcholine receptor subunit alpha-10 (450 aa).

The N-terminal stretch at 1–24 (MGLRSHHLSLGLLLLFLLPAECLG) is a signal peptide. At 25 to 237 (AEGRLALKLF…FTLLLRRRAA (213 aa)) the chain is on the extracellular side. 2 N-linked (GlcNAc...) asparagine glycosylation sites follow: asparagine 40 and asparagine 56. Cystine bridges form between cysteine 154/cysteine 168 and cysteine 218/cysteine 219. Transmembrane regions (helical) follow at residues 238–258 (AYVC…PLAF), 268–288 (VSLG…LAES), and 302–322 (YMAT…IMNL). Over 323 to 428 (HYCGPSVRPV…WKRLARVMDR (106 aa)) the chain is Cytoplasmic. The disordered stretch occupies residues 355 to 380 (EPCGQSRPPELSPSPQSPEGGAGPPA). Residues 429 to 449 (FFLAIFFSMALVMSLLVLVQA) traverse the membrane as a helical segment.

This sequence belongs to the ligand-gated ion channel (TC 1.A.9) family. Acetylcholine receptor (TC 1.A.9.1) subfamily. Alpha-10/CHRNA10 sub-subfamily. In terms of assembly, forms homo- or heterooligomeric channels in conjunction with CHRNA10. The native outer hair cell receptor may be composed of CHRNA9:CHRNA10 heterooligomers. Found in the stoichiometric form (CHRNA9)2:(CHRNA10)3. In terms of tissue distribution, expressed in inner-ear tissue, tonsil, immortalized B-cells, cultured T-cells and peripheral blood lymphocytes.

The protein resides in the synaptic cell membrane. Its subcellular location is the cell membrane. It catalyses the reaction Ca(2+)(in) = Ca(2+)(out). It carries out the reaction K(+)(in) = K(+)(out). The enzyme catalyses Na(+)(in) = Na(+)(out). The catalysed reaction is Mg(2+)(in) = Mg(2+)(out). Activated by a myriad of ligands such as acetylcholine. AChR activity is inhibited by the antagonists alpha-conotoxins RgIA and GeXXA, small disulfide-constrained peptides from cone snails. Functionally, component of neuronal acetylcholine receptors (nAChRs) that function as pentameric, ligand-gated cation channels with high calcium permeability. nAChRs are excitatory neurotrasnmitter receptors formed by a collection of nAChR subunits. Each nAchR subunit confers differential attributes to channel properties, including activation, deactivation and desensitization kinetics, pH sensitivity, cation permeability, and binding to allosteric modulators. Forms heteropentamers with CHRNA9. Expressed in the inner ear, in sympathetic neurons and in other non-neuronal cells, such as skin keratinocytes and lymphocytes. nAChR formed by CHRNA9:CHRNA10 is involved in modulation of auditory stimuli. The channel is permeable to a range of divalent cations including calcium, the influx of which may activate a potassium current which hyperpolarizes the cell membrane. In the ear, mediates synaptic transmission between efferent olivocochlear fibers and hair cells of the cochlea, this may lead to a reduction in basilar membrane motion, altering the activity of auditory nerve fibers and reducing the range of dynamic hearing. This may protect against acoustic trauma. May also regulate keratinocyte adhesion. This is Neuronal acetylcholine receptor subunit alpha-10 from Homo sapiens (Human).